We begin with the raw amino-acid sequence, 376 residues long: UDP-N-acetylglucosamine--N-acetylmuramyl-(pentapeptide) pyrophosphoryl-undecaprenol N-acetylglucosamine transferase (376 aa).

Residues T11 to G13, N117, R160, S208, and Q310 each bind UDP-N-acetyl-alpha-D-glucosamine.

Belongs to the glycosyltransferase 28 family. MurG subfamily.

It localises to the cell inner membrane. The enzyme catalyses di-trans,octa-cis-undecaprenyl diphospho-N-acetyl-alpha-D-muramoyl-L-alanyl-D-glutamyl-meso-2,6-diaminopimeloyl-D-alanyl-D-alanine + UDP-N-acetyl-alpha-D-glucosamine = di-trans,octa-cis-undecaprenyl diphospho-[N-acetyl-alpha-D-glucosaminyl-(1-&gt;4)]-N-acetyl-alpha-D-muramoyl-L-alanyl-D-glutamyl-meso-2,6-diaminopimeloyl-D-alanyl-D-alanine + UDP + H(+). The protein operates within cell wall biogenesis; peptidoglycan biosynthesis. Functionally, cell wall formation. Catalyzes the transfer of a GlcNAc subunit on undecaprenyl-pyrophosphoryl-MurNAc-pentapeptide (lipid intermediate I) to form undecaprenyl-pyrophosphoryl-MurNAc-(pentapeptide)GlcNAc (lipid intermediate II). The sequence is that of UDP-N-acetylglucosamine--N-acetylmuramyl-(pentapeptide) pyrophosphoryl-undecaprenol N-acetylglucosamine transferase from Rickettsia peacockii (strain Rustic).